We begin with the raw amino-acid sequence, 321 residues long: Urease accessory protein UreD (321 aa).

The protein belongs to the UreD family. UreD, UreF and UreG form a complex that acts as a GTP-hydrolysis-dependent molecular chaperone, activating the urease apoprotein by helping to assemble the nickel containing metallocenter of UreC. The UreE protein probably delivers the nickel.

The protein localises to the cytoplasm. In terms of biological role, required for maturation of urease via the functional incorporation of the urease nickel metallocenter. This is Urease accessory protein UreD from Yersinia pseudotuberculosis serotype O:1b (strain IP 31758).